The following is a 536-amino-acid chain: Metal transporter Nramp2 (536 aa).

The interval 1-37 (MSSPSGGEDSKDDEKDEESNRLLPLSSSSQSQSLQSE) is disordered. Positions 22-36 (LLPLSSSSQSQSLQS) are enriched in low complexity. A glycan (N-linked (GlcNAc...) asparagine) is linked at N38. A run of 12 helical transmembrane segments spans residues 76–96 (LWLFTGPGFLMSIAFLDPGNL), 104–124 (AIAGYSLLWLLLWATVMGLLI), 161–181 (VALIGADIQEVIGSAIAIQIL), 185–205 (FLPLWAGVLITASDCFMFLFL), 213–233 (LEGVFAVLIATMALSFAWMCG), 259–279 (AVGVVGCVIMPHNVFLHSALV), 305–325 (VALFVSFMINLFVTTVFAKGF), 347–367 (YGGGLFPILYIWGIGLLAAGQ), 400–420 (SFAIIPTIIVAIIFNTSEASL), 435–455 (IPFALIPLLTLVAKEQVMGVF), 465–485 (AWTIAVLVILINGYLLIDFFI), and 492–512 (LFGFLIGSGTVAYVSFIIYLV).

It belongs to the NRAMP (TC 2.A.55) family.

Its subcellular location is the membrane. Functionally, probable divalent metal transporter. The chain is Metal transporter Nramp2 from Populus trichocarpa (Western balsam poplar).